The sequence spans 442 residues: ATP-dependent protease ATPase subunit HslU (442 aa).

Residues Ile18 and 60 to 65 (GVGKTE) each bind ATP. The tract at residues 136-156 (LPKPKNDWDSTDSDANSNTRQ) is disordered. Residues Asp255, Glu320, and Arg392 each coordinate ATP.

The protein belongs to the ClpX chaperone family. HslU subfamily. As to quaternary structure, a double ring-shaped homohexamer of HslV is capped on each side by a ring-shaped HslU homohexamer. The assembly of the HslU/HslV complex is dependent on binding of ATP.

The protein resides in the cytoplasm. ATPase subunit of a proteasome-like degradation complex; this subunit has chaperone activity. The binding of ATP and its subsequent hydrolysis by HslU are essential for unfolding of protein substrates subsequently hydrolyzed by HslV. HslU recognizes the N-terminal part of its protein substrates and unfolds these before they are guided to HslV for hydrolysis. The sequence is that of ATP-dependent protease ATPase subunit HslU from Shewanella sp. (strain MR-7).